Reading from the N-terminus, the 89-residue chain is Small ribosomal subunit protein uS14A (89 aa).

This sequence belongs to the universal ribosomal protein uS14 family. Part of the 30S ribosomal subunit. Contacts proteins S3 and S10.

Functionally, binds 16S rRNA, required for the assembly of 30S particles and may also be responsible for determining the conformation of the 16S rRNA at the A site. The sequence is that of Small ribosomal subunit protein uS14A from Lactiplantibacillus plantarum (strain ATCC BAA-793 / NCIMB 8826 / WCFS1) (Lactobacillus plantarum).